The chain runs to 206 residues: RNA-binding protein with multiple splicing 2 (206 aa).

The residue at position 2 (S2) is an N-acetylserine. The region spanning 25-102 (RTLFVSGLPV…QTLRLEFAKA (78 aa)) is the RRM domain. Residues 35 to 45 (DIKPRELYLLF) are important for homodimerization.

As to quaternary structure, homodimer. Interacts with EEF2.

The protein localises to the cytoplasm. It localises to the nucleus. Its subcellular location is the stress granule. Functionally, RNA-binding protein involved in the regulation of smooth muscle cell differentiation and proliferation in the gastrointestinal system. Binds NOG mRNA, the major inhibitor of the bone morphogenetic protein (BMP) pathway. Mediates an increase of NOG mRNA levels, thereby contributing to the negative regulation of BMP signaling pathway and promoting reversible dedifferentiation and proliferation of smooth muscle cells. Acts as a pre-mRNA alternative splicing regulator. Mediates ACTN1 and FLNB alternative splicing. Likely binds to mRNA tandem CAC trinucleotide or CA dinucleotide motifs. This Mus musculus (Mouse) protein is RNA-binding protein with multiple splicing 2 (Rbpms2).